A 172-amino-acid chain; its full sequence is Large ribosomal subunit protein uL10 (172 aa).

It belongs to the universal ribosomal protein uL10 family. As to quaternary structure, part of the ribosomal stalk of the 50S ribosomal subunit. The N-terminus interacts with L11 and the large rRNA to form the base of the stalk. The C-terminus forms an elongated spine to which L12 dimers bind in a sequential fashion forming a multimeric L10(L12)X complex.

Functionally, forms part of the ribosomal stalk, playing a central role in the interaction of the ribosome with GTP-bound translation factors. In Methylorubrum populi (strain ATCC BAA-705 / NCIMB 13946 / BJ001) (Methylobacterium populi), this protein is Large ribosomal subunit protein uL10.